Here is a 653-residue protein sequence, read N- to C-terminus: Mannosyl-oligosaccharide 1,2-alpha-mannosidase IA (653 aa).

Residues 1 to 41 (MPVGGLLPLFSSPAGGVLGGGLGGGGGRKGSGPAALRLTEK) are Cytoplasmic-facing. The chain crosses the membrane as a helical; Signal-anchor for type II membrane protein span at residues 42-62 (FVLLLVFSAFITLCFGAIFFL). The Lumenal portion of the chain corresponds to 63–653 (PDSSKLLSGV…DKKEVEIREE (591 aa)). The disordered stretch occupies residues 81 to 116 (QPAADHKPGPGARAEDAAEGRARRREEGAPGDPEAA). The segment covering 84-108 (ADHKPGPGARAEDAAEGRARRREEG) has biased composition (basic and acidic residues). A disulfide bond links C476 and C508. A glycan (N-linked (GlcNAc...) asparagine) is linked at N513. Catalysis depends on E522, which acts as the Proton donor.

It belongs to the glycosyl hydrolase 47 family. It depends on Ca(2+) as a cofactor.

Its subcellular location is the golgi apparatus membrane. The catalysed reaction is N(4)-(alpha-D-Man-(1-&gt;2)-alpha-D-Man-(1-&gt;2)-alpha-D-Man-(1-&gt;3)-[alpha-D-Man-(1-&gt;2)-alpha-D-Man-(1-&gt;3)-[alpha-D-Man-(1-&gt;2)-alpha-D-Man-(1-&gt;6)]-alpha-D-Man-(1-&gt;6)]-beta-D-Man-(1-&gt;4)-beta-D-GlcNAc-(1-&gt;4)-beta-D-GlcNAc)-L-asparaginyl-[protein] (N-glucan mannose isomer 9A1,2,3B1,2,3) + 4 H2O = N(4)-(alpha-D-Man-(1-&gt;3)-[alpha-D-Man-(1-&gt;3)-[alpha-D-Man-(1-&gt;6)]-alpha-D-Man-(1-&gt;6)]-beta-D-Man-(1-&gt;4)-beta-D-GlcNAc-(1-&gt;4)-beta-D-GlcNAc)-L-asparaginyl-[protein] (N-glucan mannose isomer 5A1,2) + 4 beta-D-mannose. The enzyme catalyses N(4)-(alpha-D-Man-(1-&gt;2)-alpha-D-Man-(1-&gt;2)-alpha-D-Man-(1-&gt;3)-[alpha-D-Man-(1-&gt;3)-[alpha-D-Man-(1-&gt;2)-alpha-D-Man-(1-&gt;6)]-alpha-D-Man-(1-&gt;6)]-beta-D-Man-(1-&gt;4)-beta-D-GlcNAc-(1-&gt;4)-beta-D-GlcNAc)-L-asparaginyl-[protein] (N-glucan mannose isomer 8A1,2,3B1,3) + 3 H2O = N(4)-(alpha-D-Man-(1-&gt;3)-[alpha-D-Man-(1-&gt;3)-[alpha-D-Man-(1-&gt;6)]-alpha-D-Man-(1-&gt;6)]-beta-D-Man-(1-&gt;4)-beta-D-GlcNAc-(1-&gt;4)-beta-D-GlcNAc)-L-asparaginyl-[protein] (N-glucan mannose isomer 5A1,2) + 3 beta-D-mannose. Its pathway is protein modification; protein glycosylation. Inhibited by both 1-deoxymannojirimycin and kifunensine. In terms of biological role, involved in the maturation of Asn-linked oligosaccharides. Progressively trim alpha-1,2-linked mannose residues from Man(9)GlcNAc(2) to produce Man(5)GlcNAc(2). The chain is Mannosyl-oligosaccharide 1,2-alpha-mannosidase IA (MAN1A1) from Homo sapiens (Human).